A 376-amino-acid polypeptide reads, in one-letter code: MSISIMTETRPESAEQQHHEVLQRPSDEPCSGCKQLQKDVAKTISMVMERMDKLQYRLDELLKENNELKSSSVSSGKASPSPAESRSSPKLVETVVAPVSGARKRKPKERSPPAAASPLPDFSNLMNGFMFDPLNMSNPNGMMQLLSMVQQQQQQQQHHQHIENQQSVSPPQSKSVKIEDPMDQDVKQEESERSDIPTATEAQNLLDALTAQFSSNGQATSTTSPPSSSSQVQAVIEAVATPSSQSQDSSMFEKTETSGDPNAARCSNCRTDKTTAWRRDAEGKLVCNPCGLYYRLHKVRRPIEMRKNHIQQRYRRKNKEKESSAATQIFNQLLTQMPTMATGGVSTDGAINTFNLLEQISQFTQAQELMNSSATF.

4 disordered regions span residues 1 to 33, 65 to 122, 148 to 197, and 240 to 264; these read MSIS…CSGC, NNEL…LPDF, MVQQ…SDIP, and ATPS…PNAA. Residues 9–27 are compositionally biased toward basic and acidic residues; sequence TRPESAEQQHHEVLQRPSD. Low complexity-rich tracts occupy residues 68–89 and 165–175; these read LKSS…RSSP and QQSVSPPQSKS. Basic and acidic residues predominate over residues 176-195; that stretch reads VKIEDPMDQDVKQEESERSD. Residues 241–250 are compositionally biased toward polar residues; the sequence is TPSSQSQDSS. Residues 266 to 290 form a GATA-type zinc finger; it reads CSNCRTDKTTAWRRDAEGKLVCNPC.

As to expression, expressed in differentiated seam cells. Expressed in the head and trunk.

It is found in the nucleus. Probable transcription factor. Involved in embryonic development and in vulval development in larvae, acting redundantly, at least in part, with elt-6. Perhaps acting together with elt-6, may form a positive feedback loop to initiate and maintain lin-39 gene expression to ensure proper vulval precursor cell (VPC) fate specification. Together with elt-6, acts as a downstream target of the Wnt/beta-catenin asymmetry pathway, required to adopt or maintain the seam cell fate. Required in seam cells, acting redundantly with elt-6, to promote production of alae, expression of several seam-specific genes and maintenance of seam cells in an unfused state. Plays a role in longevity. May form a transcriptional circuit with GATA factors elt-3 and elt-6. The polypeptide is Putative transcription factor egl-18 (Caenorhabditis elegans).